Here is a 217-residue protein sequence, read N- to C-terminus: D-methionine transport system permease protein MetI (217 aa).

At 1–19 (MSEAMMWLLVRGVWETLAM) the chain is on the periplasmic side. An ABC transmembrane type-1 domain is found at 13-204 (VWETLAMTFV…LLVVLVYLIQ (192 aa)). Residues 20–40 (TFVSGFFGFVIGLPVGVLLYV) traverse the membrane as a helical segment. Residues 41-54 (TRPGQIMENARLYR) are Cytoplasmic-facing. Residues 55–77 (SLSAVVNIFRSIPFIILLVWMIP) traverse the membrane as a helical segment. The Periplasmic segment spans residues 78–92 (FTRIIVGTSIGLQAA). The chain crosses the membrane as a helical span at residues 93 to 113 (IVPLTVGAAPFIARMVENALL). At 114 to 151 (EIPAGLIEASRAMGATPLQIVRKILLPEALPGLVNAAT) the chain is on the cytoplasmic side. The helical transmembrane segment at 152 to 172 (ITLITLVGYSAMGGAVGAGGL) threads the bilayer. Topologically, residues 173-185 (GQIGYQYGYIGYN) are periplasmic. The helical transmembrane segment at 186–206 (ATVMNTVLVLLVVLVYLIQLS) threads the bilayer. The Cytoplasmic segment spans residues 207–217 (GDRIVRAVTHK).

The protein belongs to the binding-protein-dependent transport system permease family. CysTW subfamily.

Its subcellular location is the cell inner membrane. Functionally, part of the binding-protein-dependent transport system for D-methionine and the toxic methionine analog alpha-methyl-methionine. Probably responsible for the translocation of the substrate across the membrane. The sequence is that of D-methionine transport system permease protein MetI (metI) from Salmonella typhimurium (strain LT2 / SGSC1412 / ATCC 700720).